The chain runs to 274 residues: Actin-binding protein Smlt3054 (274 aa).

ANK repeat units follow at residues 192-221 (SGNT…DVAA) and 225-254 (HGWA…NPEQ). Residues 251–274 (NPEQPGWRGRTPTRMHRHEQTQAL) form a disordered region.

Exists as a dimer as well as a higher order oligomer.

The protein resides in the secreted. It localises to the periplasm. Directly binds F-actin, which results in thickened and distorted F-actin fibers, and affects cellular F-actin localization. Thus, may be a host effector whose function is to disrupt host actin cytoskeletal structure, which may enhance invasion. In Stenotrophomonas maltophilia (strain K279a), this protein is Actin-binding protein Smlt3054.